Reading from the N-terminus, the 382-residue chain is D-galactonate dehydratase (382 aa).

D183 is a binding site for Mg(2+). The active-site Proton donor is H185. Mg(2+) is bound by residues E209 and E235. The active-site Proton acceptor is H285. The disordered stretch occupies residues 361-382 (NENPPDWRNPVWRHSDGSIAEW).

This sequence belongs to the mandelate racemase/muconate lactonizing enzyme family. GalD subfamily. Requires Mg(2+) as cofactor.

The enzyme catalyses D-galactonate = 2-dehydro-3-deoxy-D-galactonate + H2O. It functions in the pathway carbohydrate acid metabolism; D-galactonate degradation; D-glyceraldehyde 3-phosphate and pyruvate from D-galactonate: step 1/3. Its function is as follows. Catalyzes the dehydration of D-galactonate to 2-keto-3-deoxy-D-galactonate. The sequence is that of D-galactonate dehydratase from Xanthomonas euvesicatoria pv. vesicatoria (strain 85-10) (Xanthomonas campestris pv. vesicatoria).